A 62-amino-acid chain; its full sequence is Photosystem II reaction center protein Z (62 aa).

2 helical membrane-spanning segments follow: residues 8 to 28 (AVFA…VALA) and 41 to 61 (FSGV…NSFI).

It belongs to the PsbZ family. As to quaternary structure, PSII is composed of 1 copy each of membrane proteins PsbA, PsbB, PsbC, PsbD, PsbE, PsbF, PsbH, PsbI, PsbJ, PsbK, PsbL, PsbM, PsbT, PsbY, PsbZ, Psb30/Ycf12, at least 3 peripheral proteins of the oxygen-evolving complex and a large number of cofactors. It forms dimeric complexes.

It is found in the plastid. The protein resides in the chloroplast thylakoid membrane. In terms of biological role, may control the interaction of photosystem II (PSII) cores with the light-harvesting antenna, regulates electron flow through the 2 photosystem reaction centers. PSII is a light-driven water plastoquinone oxidoreductase, using light energy to abstract electrons from H(2)O, generating a proton gradient subsequently used for ATP formation. In Pinus thunbergii (Japanese black pine), this protein is Photosystem II reaction center protein Z.